Here is a 794-residue protein sequence, read N- to C-terminus: Putative neurotrophin receptor LTRK 1 (794 aa).

Positions 1–33 (MRGPRRFRLWTRANVLTVISILTSILSGAGCSP) are cleaved as a signal peptide. The Extracellular portion of the chain corresponds to 34 to 419 (LSQLPSDNPA…PTEDFGPQTQ (386 aa)). The segment at 36 to 102 (QLPSDNPAHV…DQVPGDASRN (67 aa)) is disordered. N-linked (GlcNAc...) asparagine glycosylation is found at Asn-64, Asn-102, and Asn-128. LRR repeat units follow at residues 181–202 (CLKH…AFKT) and 205–226 (SLET…LLRT). An LRRCT domain is found at 237 to 280 (NALTCSCTNLWLRSVDVAADRSEMTCSTRDGVSKMKMTQFKCEP). N-linked (GlcNAc...) asparagine glycosylation is found at Asn-288 and Asn-374. Residues 420 to 440 (VILPVVGVVILLISAVFIIYL) form a helical membrane-spanning segment. Topologically, residues 441-794 (CQRAKHRSHA…GDPVYIDIIA (354 aa)) are cytoplasmic. A Protein kinase domain is found at 504–775 (ILLMRVIGEG…PQDRLTMKDI (272 aa)). ATP-binding positions include 510–518 (IGEGAFGRV) and Lys-538. Asp-647 serves as the catalytic Proton acceptor. A phosphotyrosine; by autocatalysis mark is found at Tyr-673, Tyr-677, Tyr-678, and Tyr-789.

The protein belongs to the protein kinase superfamily. Tyr protein kinase family. Insulin receptor subfamily. As to expression, expression is confined to the central nervous system and its associated endocrine tissues.

It is found in the membrane. It carries out the reaction L-tyrosyl-[protein] + ATP = O-phospho-L-tyrosyl-[protein] + ADP + H(+). Functionally, may bind an endogenous invertebrate neurotrophin. Binds human NT-3, but not NGF or BDNF. The chain is Putative neurotrophin receptor LTRK 1 from Lymnaea stagnalis (Great pond snail).